The primary structure comprises 201 residues: Peptidyl-prolyl cis-trans isomerase FKBP11 (201 aa).

Residues 1 to 27 form the signal peptide; the sequence is MTLRPSLLPLHLLLLLLLSAAVCRAEA. A PPIase FKBP-type domain is found at 57 to 144; the sequence is GDTLHIHYTG…QYDVELIALI (88 aa). A helical membrane pass occupies residues 156-176; it reads ILPLVGMAMVPALLGLIGYHL.

This sequence belongs to the FKBP-type PPIase family. In terms of assembly, interacts with IFITM5.

The protein resides in the membrane. The catalysed reaction is [protein]-peptidylproline (omega=180) = [protein]-peptidylproline (omega=0). Its function is as follows. PPIases accelerate the folding of proteins during protein synthesis. The protein is Peptidyl-prolyl cis-trans isomerase FKBP11 (FKBP11) of Homo sapiens (Human).